The following is a 125-amino-acid chain: Mesotocin-neurophysin MT (125 aa).

The N-terminal stretch at 1–19 (MSYTALAVTFFGWLALSSA) is a signal peptide. Cys-20 and Cys-25 are oxidised to a cystine. Residue Gly-28 is modified to Glycine amide. 7 cysteine pairs are disulfide-bonded: Cys-42–Cys-86, Cys-45–Cys-59, Cys-53–Cys-76, Cys-60–Cys-66, Cys-93–Cys-106, Cys-100–Cys-118, and Cys-107–Cys-112.

This sequence belongs to the vasopressin/oxytocin family. As to expression, mesotocin is produced by magnocellular preoptic neurons in the hypothalamus in amphibians, reptiles and birds.

It is found in the secreted. Mesotocin is a diuretic hormone. The sequence is that of Mesotocin-neurophysin MT from Bufo japonicus (Japanese common toad).